We begin with the raw amino-acid sequence, 130 residues long: Small ribosomal subunit protein uS11 (130 aa).

It belongs to the universal ribosomal protein uS11 family. As to quaternary structure, part of the 30S ribosomal subunit. Interacts with proteins S7 and S18. Binds to IF-3.

In terms of biological role, located on the platform of the 30S subunit, it bridges several disparate RNA helices of the 16S rRNA. Forms part of the Shine-Dalgarno cleft in the 70S ribosome. The chain is Small ribosomal subunit protein uS11 from Prochlorococcus marinus (strain NATL1A).